Consider the following 785-residue polypeptide: Sexual differentiation process protein isp4 (785 aa).

The tract at residues 1–28 is disordered; the sequence is MIGSINESPIEEHMNDSPSTKEKADSVD. Residues 10-26 show a composition bias toward basic and acidic residues; that stretch reads IEEHMNDSPSTKEKADS. The next 16 helical transmembrane spans lie at 94 to 114, 121 to 141, 167 to 187, 196 to 216, 264 to 284, 339 to 359, 413 to 433, 461 to 481, 490 to 510, 512 to 532, 537 to 557, 572 to 592, 611 to 631, 642 to 662, 683 to 703, and 732 to 752; these read MWTIGLIYSTVGAAVNMFFSL, LSVLISELLAYPALQIWDLIF, LIVVMSSVSFGNAYSTDIILA, FGFGYEICLTLATQLIGYGLA, FFLYVFIASFIWNWFPSYIFQ, LMNILLGVILFFWIVTPALNF, ALAFGLSFASITSVIFHVILY, VPFYWYLSVFLAFFGMMMGTI, WWVIIVGVIFSAVWFIPIGIV, AITNIQLGLNVFTEFIVGYMY, LAMMIFKTVGYITMTQGLAFA, IMFYTQMIATIWSCFVQIGVL, YTCPNATVFFNSSVIWGVIGP, TGLQYFWLAGVLGTILFWALW, GYIPPATPVNYLAWSGIGLFF, and LSVIILFFCLQLPMVNFPDWW.

It belongs to the oligopeptide OPT transporter family.

It localises to the endoplasmic reticulum membrane. This Schizosaccharomyces pombe (strain 972 / ATCC 24843) (Fission yeast) protein is Sexual differentiation process protein isp4 (isp4).